The chain runs to 357 residues: Palmitoyltransferase ZDHHC20-A (357 aa).

The Cytoplasmic segment spans residues 1–14; sequence MAPSHAVRCCQRGL. A helical membrane pass occupies residues 15-35; that stretch reads SWIPVIFINLVVCWSYYAYVV. The Lumenal portion of the chain corresponds to 36-50; sequence ELCIYTIPNVNEQVI. Residues 51-71 form a helical membrane-spanning segment; sequence YLVVFHAFFFMFMWSYWKTIS. Over 72–166 the chain is Cytoplasmic; sequence SKPTNPSKEF…NNCVGFSNYK (95 aa). The DHHC domain maps to 123–173; the sequence is RYCDRCQLIKPDRCHHCSTCDKCVLKMDHHCPWVNNCVGFSNYKFFVLFLA. Cys-153 functions as the S-palmitoyl cysteine intermediate in the catalytic mechanism. A helical membrane pass occupies residues 167–187; the sequence is FFVLFLAYSMLYCVYIAATVL. Residues 188–204 are Lumenal-facing; that stretch reads QYFIKFWTNQLPDTHAK. The helical transmembrane segment at 205-228 threads the bilayer; that stretch reads FHVLFLFFVAAMFFISILSLFSYH. Over 229–357 the chain is Cytoplasmic; the sequence is LWLVGKNRTT…PVCVTLENES (129 aa).

The protein belongs to the DHHC palmitoyltransferase family.

The protein localises to the golgi apparatus membrane. It is found in the cell membrane. It localises to the cytoplasm. Its subcellular location is the perinuclear region. The protein resides in the endoplasmic reticulum membrane. The protein localises to the endoplasmic reticulum-Golgi intermediate compartment membrane. It catalyses the reaction L-cysteinyl-[protein] + hexadecanoyl-CoA = S-hexadecanoyl-L-cysteinyl-[protein] + CoA. It carries out the reaction L-cysteinyl-[protein] + tetradecanoyl-CoA = S-tetradecanoyl-L-cysteinyl-[protein] + CoA. The catalysed reaction is L-cysteinyl-[protein] + octadecanoyl-CoA = S-octadecanoyl-L-cysteinyl-[protein] + CoA. Its function is as follows. Palmitoyltransferase that could catalyze the addition of palmitate onto various protein substrates. Catalyzes palmitoylation of Cys residues on protein substrates and has a preference for acyl-CoA with C16 fatty acid chains but may also utilize acyl-CoA with C14 and C18 fatty acid chains. The protein is Palmitoyltransferase ZDHHC20-A of Danio rerio (Zebrafish).